The following is a 584-amino-acid chain: Protein DENND6A (584 aa).

The disordered stretch occupies residues 1–23 (MALWERGAGGAAEAGEDATEEPE). A uDENN domain is found at 39 to 218 (HCVCVVGFDL…KLRIPTYRDK (180 aa)). Residues 244-369 (EVDLFRCFCP…VKVKKLKNLK (126 aa)) form the cDENN domain. The 134-residue stretch at 371 to 504 (LDSKPGVYTS…RSRQKEMTQN (134 aa)) folds into the dDENN domain.

Belongs to the DENND6 family.

The protein localises to the recycling endosome. Its subcellular location is the cytoplasm. Guanine nucleotide exchange factor (GEF) for RAB14. The protein is Protein DENND6A (DENND6A) of Gallus gallus (Chicken).